Consider the following 464-residue polypeptide: Argininosuccinate lyase (464 aa).

This sequence belongs to the lyase 1 family. Argininosuccinate lyase subfamily.

It is found in the cytoplasm. It catalyses the reaction 2-(N(omega)-L-arginino)succinate = fumarate + L-arginine. Its pathway is amino-acid biosynthesis; L-arginine biosynthesis; L-arginine from L-ornithine and carbamoyl phosphate: step 3/3. The protein is Argininosuccinate lyase of Pseudomonas fluorescens (strain SBW25).